Reading from the N-terminus, the 216-residue chain is Small ribosomal subunit protein uS3 (216 aa).

In terms of domain architecture, KH type-2 spans 38–106 (IRGYLKKKLY…EIIINILEVR (69 aa)).

The protein belongs to the universal ribosomal protein uS3 family. As to quaternary structure, part of the 30S ribosomal subunit. Forms a tight complex with proteins S10 and S14.

Functionally, binds the lower part of the 30S subunit head. Binds mRNA in the 70S ribosome, positioning it for translation. The sequence is that of Small ribosomal subunit protein uS3 from Syntrophus aciditrophicus (strain SB).